The sequence spans 127 residues: Major sperm protein 55/57 (127 aa).

Alanine 2 carries the N-acetylalanine modification. In terms of domain architecture, MSP spans 9-126 (DIQTQPGTKI…RRKNLPIEYN (118 aa)).

As to expression, sperm.

Its subcellular location is the cell projection. The protein localises to the pseudopodium. The protein resides in the cytoplasm. It is found in the cytoskeleton. Its function is as follows. Central component in molecular interactions underlying sperm crawling. Forms an extensive filament system that extends from sperm villipoda, along the leading edge of the pseudopod. The chain is Major sperm protein 55/57 (msp-55) from Caenorhabditis elegans.